The following is a 203-amino-acid chain: Suppressor/enhancer of lin-12 protein 9 (203 aa).

The first 18 residues, 1–18 (MNSLTWILAVLFVTPAAS), serve as a signal peptide directing secretion. Residues 19-170 (YFIHVDANEE…RNINENTNSR (152 aa)) are Lumenal-facing. The region spanning 28-110 (EQCFFDRLTS…PKAVMFTVEI (83 aa)) is the GOLD domain. A helical transmembrane segment spans residues 171–191 (VVMWAAFEAFVLVGMTVGQIF). Topologically, residues 192–203 (YLKRFFEVRTMV) are cytoplasmic.

It belongs to the EMP24/GP25L family.

Its subcellular location is the cytoplasmic vesicle membrane. It localises to the cytoplasmic vesicle. The protein localises to the COPI-coated vesicle membrane. The protein resides in the golgi apparatus membrane. In terms of biological role, may have a role in the negative regulation of lin-12 and glp-1 transport to the cell surface. May also have a role in a quality control mechanism for endoplasmic reticulum-Golgi transport; the budding of coatomer-coated and other species of coated vesicles, could bind cargo molecules to collect them into budding vesicles. Involved in regulating the expression of proteasomal subunits such as rpt-3 in order to confer resistance to proteasomal dysfunction. This Caenorhabditis elegans protein is Suppressor/enhancer of lin-12 protein 9 (sel-9).